The chain runs to 285 residues: Pantothenate synthetase (285 aa).

30-37 (MGFLHEGH) provides a ligand contact to ATP. Catalysis depends on histidine 37, which acts as the Proton donor. Glutamine 61 lines the (R)-pantoate pocket. Residue glutamine 61 participates in beta-alanine binding. ATP is bound at residue 147–150 (GQKD). Position 153 (glutamine 153) interacts with (R)-pantoate. ATP is bound by residues valine 176 and 184–187 (KSSR).

This sequence belongs to the pantothenate synthetase family. Homodimer.

The protein resides in the cytoplasm. The catalysed reaction is (R)-pantoate + beta-alanine + ATP = (R)-pantothenate + AMP + diphosphate + H(+). It functions in the pathway cofactor biosynthesis; (R)-pantothenate biosynthesis; (R)-pantothenate from (R)-pantoate and beta-alanine: step 1/1. In terms of biological role, catalyzes the condensation of pantoate with beta-alanine in an ATP-dependent reaction via a pantoyl-adenylate intermediate. This is Pantothenate synthetase from Listeria welshimeri serovar 6b (strain ATCC 35897 / DSM 20650 / CCUG 15529 / CIP 8149 / NCTC 11857 / SLCC 5334 / V8).